Consider the following 324-residue polypeptide: Protoheme IX farnesyltransferase (324 aa).

Helical transmembrane passes span 31–51 (LIVL…RGEV), 53–73 (PVLA…ANTI), 104–124 (LVFA…CANL), 125–145 (LSAC…THWL), 153–173 (IVIG…AVTG), 181–201 (VLFA…AMLI), 222–242 (TAWQ…LLVY), 243–263 (PLHA…VVFI), and 285–305 (FSIL…LPLT).

It belongs to the UbiA prenyltransferase family. Protoheme IX farnesyltransferase subfamily.

It is found in the cell inner membrane. The enzyme catalyses heme b + (2E,6E)-farnesyl diphosphate + H2O = Fe(II)-heme o + diphosphate. It functions in the pathway porphyrin-containing compound metabolism; heme O biosynthesis; heme O from protoheme: step 1/1. Its function is as follows. Converts heme B (protoheme IX) to heme O by substitution of the vinyl group on carbon 2 of heme B porphyrin ring with a hydroxyethyl farnesyl side group. The polypeptide is Protoheme IX farnesyltransferase (Cyanothece sp. (strain PCC 7425 / ATCC 29141)).